The chain runs to 119 residues: Beta-2-microglobulin (119 aa).

The signal sequence occupies residues Met1–Ala20. Residues Pro25–Lys114 form the Ig-like C1-type domain. The cysteines at positions 45 and 100 are disulfide-linked.

Belongs to the beta-2-microglobulin family. Heterodimer of an alpha chain and a beta chain. Beta-2-microglobulin is the beta-chain of major histocompatibility complex class I molecules.

It localises to the secreted. Its function is as follows. Component of the class I major histocompatibility complex (MHC). Involved in the presentation of peptide antigens to the immune system. The chain is Beta-2-microglobulin (B2M) from Cebuella pygmaea (Pygmy marmoset).